We begin with the raw amino-acid sequence, 399 residues long: F-box protein At1g10110 (399 aa).

Positions 9-56 (PNWSELVTDILSLVFKHLSFTDFARAKTVCSSWYFASKSSSPRKNHTP) constitute an F-box domain.

This is F-box protein At1g10110 from Arabidopsis thaliana (Mouse-ear cress).